A 339-amino-acid chain; its full sequence is Biotin synthase (339 aa).

The Radical SAM core domain occupies 51 to 278; that stretch reads SEVELATLLS…KARVRLSAGR (228 aa). [4Fe-4S] cluster is bound by residues Cys-66, Cys-70, and Cys-73. Residues Cys-110, Cys-141, Cys-201, and Arg-273 each coordinate [2Fe-2S] cluster.

The protein belongs to the radical SAM superfamily. Biotin synthase family. As to quaternary structure, homodimer. [4Fe-4S] cluster serves as cofactor. Requires [2Fe-2S] cluster as cofactor.

It carries out the reaction (4R,5S)-dethiobiotin + (sulfur carrier)-SH + 2 reduced [2Fe-2S]-[ferredoxin] + 2 S-adenosyl-L-methionine = (sulfur carrier)-H + biotin + 2 5'-deoxyadenosine + 2 L-methionine + 2 oxidized [2Fe-2S]-[ferredoxin]. The protein operates within cofactor biosynthesis; biotin biosynthesis; biotin from 7,8-diaminononanoate: step 2/2. Catalyzes the conversion of dethiobiotin (DTB) to biotin by the insertion of a sulfur atom into dethiobiotin via a radical-based mechanism. The sequence is that of Biotin synthase from Herminiimonas arsenicoxydans.